The primary structure comprises 201 residues: Small ribosomal subunit protein uS4 (201 aa).

Residues 91–151 (SRLDNVVYRA…EKSQKMNWFE (61 aa)) form the S4 RNA-binding domain.

The protein belongs to the universal ribosomal protein uS4 family. In terms of assembly, part of the 30S ribosomal subunit. Contacts protein S5. The interaction surface between S4 and S5 is involved in control of translational fidelity.

Functionally, one of the primary rRNA binding proteins, it binds directly to 16S rRNA where it nucleates assembly of the body of the 30S subunit. With S5 and S12 plays an important role in translational accuracy. In Corynebacterium glutamicum (strain R), this protein is Small ribosomal subunit protein uS4.